We begin with the raw amino-acid sequence, 163 residues long: MTADRPVTLAAIAGAHGVRGEVRLKLFGEGAETLRAFSVFDAGDRKLTLKSVRPANQGAVAAFVEIADRSAAEALRGTLLTVPRSALPPLGPGEYYHHDLIGLPCVSTEGAPVGHVAAVDNFGAGDILEIEKPDGKRFMVPMTVTAVPTWDAETVTVNAAFIE.

Residues 92–161 (PGEYYHHDLI…AETVTVNAAF (70 aa)) form the PRC barrel domain.

This sequence belongs to the RimM family. As to quaternary structure, binds ribosomal protein uS19.

The protein resides in the cytoplasm. An accessory protein needed during the final step in the assembly of 30S ribosomal subunit, possibly for assembly of the head region. Essential for efficient processing of 16S rRNA. May be needed both before and after RbfA during the maturation of 16S rRNA. It has affinity for free ribosomal 30S subunits but not for 70S ribosomes. The protein is Ribosome maturation factor RimM of Sphingopyxis alaskensis (strain DSM 13593 / LMG 18877 / RB2256) (Sphingomonas alaskensis).